The sequence spans 1487 residues: Collagen alpha-1(II) chain (1487 aa).

Positions 1–25 (MIRLGAPQSLVLLTLLIAAVLRCQG) are cleaved as a signal peptide. The propeptide at 26–181 (QDAQEAGSCL…PGLSAGNFAA (156 aa)) is N-terminal propeptide. Residues 32–89 (GSCLQNGQRYKDKDVWKPSSCRICVCDTGNVLCDDIICEDPDCLNPEIPFGECCPICP) form the VWFC domain. Residues 96-179 (SGKLGPKGQK…GPPGLSAGNF (84 aa)) form a disordered region. Basic and acidic residues-rich tracts occupy residues 104–115 (QKGEPGDIRDII) and 132–153 (PRGD…RDGE). Residues 157-172 (PGNPGPAGPPGPPGPP) are compositionally biased toward pro residues. K190 carries the 5-hydroxylysine modification. Residue K190 is glycosylated (O-linked (Gal...) hydroxylysine). A disordered region spans residues 191-1237 (AGGAQMGVMQ…QREKGPDPMQ (1047 aa)). Over residues 192-203 (GGAQMGVMQGPM) the composition is skewed to low complexity. A triple-helical region region spans residues 201 to 1214 (GPMGPMGPRG…PGPPGPPGPP (1014 aa)). Pro residues predominate over residues 208–217 (PRGPPGPAGA). Residues 218–239 (PGPQGFQGNPGEPGEPGVSGPM) show a composition bias toward low complexity. Positions 251 to 265 (PGDDGEAGKPGKSGE) are enriched in basic and acidic residues. K287, K299, and K308 each carry 5-hydroxylysine. O-linked (Gal...) hydroxylysine glycosylation is found at K287, K299, and K308. Composition is skewed to low complexity over residues 310 to 320 (ESGSPGENGSP) and 335 to 350 (TGPA…DGQP). Residues 360–369 (GPAGGPGFPG) show a composition bias toward gly residues. Low complexity-rich tracts occupy residues 370-382 (APGA…PTGA) and 403-431 (PAGA…AGAP). K374 is subject to 5-hydroxylysine. A glycan (O-linked (Gal...) hydroxylysine) is linked at K374. The segment covering 433 to 442 (FPGPRGPPGP) has biased composition (pro residues). Over residues 472–485 (ETGPAGPQGAPGPA) the composition is skewed to low complexity. Residues K608 and K620 each carry the 5-hydroxylysine modification. 2 O-linked (Gal...) hydroxylysine glycosylation sites follow: K608 and K620. The segment covering 622-631 (LAGAPGLRGL) has biased composition (low complexity). 2 positions are modified to 4-hydroxyproline: P659 and P668. P670 carries the post-translational modification 3-hydroxyproline. 2 positions are modified to 4-hydroxyproline: P671 and P674. Over residues 706–736 (ERGSPGAQGLQGPRGLPGTPGTDGPKGAAGP) the composition is skewed to low complexity. Residues 764-775 (KGDRGDVGEKGP) show a composition bias toward basic and acidic residues. 2 stretches are compositionally biased toward low complexity: residues 833–848 (AGFA…PGAK) and 877–914 (PTGV…NGNP). P907 carries the post-translational modification 3-hydroxyproline. A 4-hydroxyproline mark is found at P908, P914, and P920. Over residues 962–980 (DGPSGLDGPPGPQGLAGQR) the composition is skewed to low complexity. Over residues 1069–1079 (APGPPGSPGPA) the composition is skewed to pro residues. A compositionally biased stretch (basic and acidic residues) spans 1115-1129 (RGDKGESGEQGERGL). At P1144 the chain carries 3-hydroxyproline. Composition is skewed to low complexity over residues 1148–1157 (SGDQGASGPA) and 1171–1181 (PSGKDGSNGIP). P1181 carries the post-translational modification 4-hydroxyproline. A 3-hydroxyproline modification is found at P1186. 4-hydroxyproline is present on P1187. Pro residues predominate over residues 1199-1216 (VGPPGSPGPPGPPGPPGP). Position 1201 is a 3-hydroxyproline (P1201). 4-hydroxyproline is present on residues P1202 and P1205. The residue at position 1207 (P1207) is a 3-hydroxyproline. P1208 and P1211 each carry 4-hydroxyproline. P1213 is modified (3-hydroxyproline). A 4-hydroxyproline modification is found at P1214. The segment at 1215–1241 (GPGIDMSAFAGLGQREKGPDPMQYMRA) is nonhelical region (C-terminal). Residues 1253–1487 (VEVDATLKSL…GVDIGPVCFL (235 aa)) form the Fibrillar collagen NC1 domain. Disulfide bonds link C1283/C1315, C1323/C1485, and C1393/C1438. Ca(2+)-binding residues include D1301, N1303, Q1304, C1306, and D1309.

It belongs to the fibrillar collagen family. As to quaternary structure, homotrimers of alpha 1(II) chains. In terms of processing, contains mostly 4-hydroxyproline. Prolines at the third position of the tripeptide repeating unit (G-X-P) are 4-hydroxylated in some or all of the chains. Post-translationally, contains 3-hydroxyproline at a few sites. This modification occurs on the first proline residue in the sequence motif Gly-Pro-Hyp, where Hyp is 4-hydroxyproline. Lysine residues at the third position of the tripeptide repeating unit (G-X-Y) are 5-hydroxylated in some or all of the chains. In terms of processing, O-glycosylated on hydroxylated lysine residues. The O-linked glycan consists of a Glc-Gal disaccharide.

The protein resides in the secreted. It is found in the extracellular space. The protein localises to the extracellular matrix. Its function is as follows. Type II collagen is specific for cartilaginous tissues. It is essential for the normal embryonic development of the skeleton, for linear growth and for the ability of cartilage to resist compressive forces. The protein is Collagen alpha-1(II) chain of Mus musculus (Mouse).